The following is a 113-amino-acid chain: MKLPIPYQMAVSTVHLKLTDQSAKKDRYGRTIPSWEGDIAKCVVNMQTTYSGTNNDRQIVANGLVMMYAGYSDPIPALTKENLESKLTYKGQEYTVKSINRFDQPGHRRLILL.

It belongs to the Lactobacillus delbrueckii bacteriophages ORF5 protein family.

This is an uncharacterized protein from Lactobacillus delbrueckii (Lactococcus delbrueckii bacteriophage mv4).